The chain runs to 290 residues: UPF0046 protein K07C11.7 (290 aa).

The N-terminal stretch at M1–A22 is a signal peptide. N-linked (GlcNAc...) asparagine glycosylation occurs at N204.

The protein belongs to the UPF0046 family.

This is UPF0046 protein K07C11.7 from Caenorhabditis elegans.